Reading from the N-terminus, the 1645-residue chain is Histone-lysine N-methyltransferase set-26 (1645 aa).

Disordered regions lie at residues 1–82 (MADG…QQIP), 109–132 (EPAA…RPTE), 200–228 (DAVG…SVAP), 417–606 (TPEQ…VLRP), and 651–789 (TGQS…DEAA). Composition is skewed to low complexity over residues 16-31 (EQPP…AEPI) and 67-82 (QEFY…QQIP). Polar residues predominate over residues 207–228 (PGTQYRRNQQTGGGLPSTSVAP). Low complexity-rich tracts occupy residues 429–443 (RQRA…AAQR) and 453–467 (RPGA…PSMA). The span at 559 to 578 (MTQEEKNAHFARLTTDKEKP) shows a compositional bias: basic and acidic residues. The span at 592–603 (PHVPPPPPPPLV) shows a compositional bias: pro residues. Positions 651–675 (TGQSGSSAAARQRTVSGSAARAQTY) are enriched in polar residues. Composition is skewed to basic residues over residues 684–699 (QHHH…RHSS) and 731–741 (HRPRGRPKGTR). Residues 780–789 (SESEGIDEAA) show a composition bias toward acidic residues. The segment at 794–842 (TMRCHCGMDHGDGDTIECEGCKTWQHMACMGLTLKSNTSKYKCEMCLPR) adopts a PHD-type zinc-finger fold. The segment at 865–904 (AAKKQKRKSEPVEQKQKSQPSTSRKSAPMALQQQPAEPRV) is disordered. Residues 881-899 (KSQPSTSRKSAPMALQQQP) show a composition bias toward polar residues. An SET domain is found at 973 to 1064 (MSNEVKRQPG…RNTEVTLPFD (92 aa)). Residues 1099 to 1172 (RHRAMDHKKR…EAKERKKMEV (74 aa)) are compositionally biased toward basic and acidic residues. 3 disordered regions span residues 1099–1333 (RHRA…SKNV), 1371–1536 (SGLL…STEG), and 1548–1645 (PLDD…TRWN). Positions 1103–1217 (MDHKKREAEE…GKRKEARRRS (115 aa)) form a coiled coil. Positions 1173–1183 (EASAAAAPESS) are enriched in low complexity. Residues 1188–1210 (AREERRIQQAEEMFRRQEEEGKR) are compositionally biased toward basic and acidic residues. 2 stretches are compositionally biased toward polar residues: residues 1258-1268 (TTQPSTSSFAT) and 1300-1311 (TVATPKDTTASN). Composition is skewed to basic and acidic residues over residues 1382-1427 (SEVR…KKAN), 1434-1450 (KSEK…EKKP), and 1468-1485 (KKTE…ESSS). Over residues 1554–1565 (SSSNTAPTTTIA) the composition is skewed to polar residues.

This sequence belongs to the class V-like SAM-binding methyltransferase superfamily. As to expression, expressed both in the germline and in somatic tissues.

It is found in the nucleus. It catalyses the reaction L-lysyl(9)-[histone H3] + 3 S-adenosyl-L-methionine = N(6),N(6),N(6)-trimethyl-L-lysyl(9)-[histone H3] + 3 S-adenosyl-L-homocysteine + 3 H(+). Histone methyltransferase that mediates trimethylation of 'Lys-9' of histone H3 in vitro. Involved in transcriptional regulation. Plays a role in the negative regulation of lifespan and in heat resistance. Together with set-9, negatively regulates lifespan in a germline-independent, partially daf-16-dependent fashion. Together with set-9, plays a role in germline development and maintenance and might play a role in the restriction of the trimethylation mark on histone H3 'Lys-4'(H3K4me3) to target genes specifically in the germline. Together with spr-5, required for transgenerational fertility. The polypeptide is Histone-lysine N-methyltransferase set-26 (Caenorhabditis elegans).